The primary structure comprises 233 residues: Probable transglycosylase IsaA (233 aa).

The N-terminal stretch at 1–29 (MKKTIMASSLAVALGVTGYAAGTGHQAHA) is a signal peptide.

The protein belongs to the transglycosylase family. IsaA subfamily.

The protein localises to the secreted. Is able to cleave peptidoglycan. The polypeptide is Probable transglycosylase IsaA (isaA) (Staphylococcus aureus (strain USA300)).